We begin with the raw amino-acid sequence, 314 residues long: Aspartate carbamoyltransferase catalytic subunit (314 aa).

Carbamoyl phosphate-binding residues include Arg64 and Thr65. Position 92 (Lys92) interacts with L-aspartate. 3 residues coordinate carbamoyl phosphate: Arg114, His142, and Gln145. Residues Arg175 and Arg230 each contribute to the L-aspartate site. Carbamoyl phosphate is bound by residues Gly271 and Pro272.

The protein belongs to the aspartate/ornithine carbamoyltransferase superfamily. ATCase family. Heterododecamer (2C3:3R2) of six catalytic PyrB chains organized as two trimers (C3), and six regulatory PyrI chains organized as three dimers (R2).

It carries out the reaction carbamoyl phosphate + L-aspartate = N-carbamoyl-L-aspartate + phosphate + H(+). It functions in the pathway pyrimidine metabolism; UMP biosynthesis via de novo pathway; (S)-dihydroorotate from bicarbonate: step 2/3. Its function is as follows. Catalyzes the condensation of carbamoyl phosphate and aspartate to form carbamoyl aspartate and inorganic phosphate, the committed step in the de novo pyrimidine nucleotide biosynthesis pathway. This Deinococcus radiodurans (strain ATCC 13939 / DSM 20539 / JCM 16871 / CCUG 27074 / LMG 4051 / NBRC 15346 / NCIMB 9279 / VKM B-1422 / R1) protein is Aspartate carbamoyltransferase catalytic subunit.